Reading from the N-terminus, the 140-residue chain is D-ribose pyranase (140 aa).

Catalysis depends on His20, which acts as the Proton donor. Substrate contacts are provided by residues Asp28, His99, and Tyr121–Ser123.

The protein belongs to the RbsD / FucU family. RbsD subfamily. In terms of assembly, homodecamer.

Its subcellular location is the cytoplasm. The catalysed reaction is beta-D-ribopyranose = beta-D-ribofuranose. It participates in carbohydrate metabolism; D-ribose degradation; D-ribose 5-phosphate from beta-D-ribopyranose: step 1/2. In terms of biological role, catalyzes the interconversion of beta-pyran and beta-furan forms of D-ribose. This is D-ribose pyranase from Pseudothermotoga lettingae (strain ATCC BAA-301 / DSM 14385 / NBRC 107922 / TMO) (Thermotoga lettingae).